The following is a 446-amino-acid chain: MKEIEKLKEEYPLLNKLIETEEVLWVNPNMEKYETAIKDSPLSEENVKDAKERLKRFASYIAKVFPETKETKGIIESPLLKIPSMKQALEKNYEQPILGELLLKCDSHLPISGSIKARGGIYEVLKHAEQLALQHGMLTEEDDYSILDSDTCREFFAKYSIAVGSTGNLGLSIGIMSAKLGFNVTVHMSADAKQWKKDLLRSKGVNVIEYEADYSKAVEEGRRQADADPSCYFVDDENSHDLFLGYAVAASRLQKQLEELEIIVDEEHPLFVYLPCGVGGGPGGVAFGLKLLYKDNVHCFFAEPTHSPCMLIGLMTGLHDKIAVQDIGIDNVTDADGLAVGRPSGFVGKTMEPFLSGDYTVSDEELYRLLKELADTENIYLEPSALAGMIGPVRVCKEDAYLQKQQLMEKMQKGTHIVWGTGGSMVPEDVMNGYYKTGEALTILEK.

Lysine 116 is modified (N6-(pyridoxal phosphate)lysine).

Belongs to the serine/threonine dehydratase family. DsdA subfamily. Pyridoxal 5'-phosphate is required as a cofactor.

The enzyme catalyses D-serine = pyruvate + NH4(+). The chain is Probable D-serine dehydratase from Bacillus cereus (strain 03BB102).